The following is a 451-amino-acid chain: Tubulin alpha-2 chain (451 aa).

Glutamine 11 provides a ligand contact to GTP. Position 40 is an N6-acetyllysine (lysine 40). GTP is bound by residues glutamate 71, glycine 144, threonine 145, threonine 179, asparagine 206, and asparagine 228. Residue glutamate 71 participates in Mg(2+) binding. Glutamate 254 is a catalytic residue.

It belongs to the tubulin family. Dimer of alpha and beta chains. A typical microtubule is a hollow water-filled tube with an outer diameter of 25 nm and an inner diameter of 15 nM. Alpha-beta heterodimers associate head-to-tail to form protofilaments running lengthwise along the microtubule wall with the beta-tubulin subunit facing the microtubule plus end conferring a structural polarity. Microtubules usually have 13 protofilaments but different protofilament numbers can be found in some organisms and specialized cells. The cofactor is Mg(2+). In terms of processing, undergoes a tyrosination/detyrosination cycle, the cyclic removal and re-addition of a C-terminal tyrosine residue by the enzymes tubulin tyrosine carboxypeptidase (TTCP) and tubulin tyrosine ligase (TTL), respectively.

It localises to the cytoplasm. It is found in the cytoskeleton. It carries out the reaction GTP + H2O = GDP + phosphate + H(+). Its function is as follows. Tubulin is the major constituent of microtubules, a cylinder consisting of laterally associated linear protofilaments composed of alpha- and beta-tubulin heterodimers. Microtubules grow by the addition of GTP-tubulin dimers to the microtubule end, where a stabilizing cap forms. Below the cap, tubulin dimers are in GDP-bound state, owing to GTPase activity of alpha-tubulin. This chain is Tubulin alpha-2 chain (TUBA2), found in Chlamydomonas reinhardtii (Chlamydomonas smithii).